The sequence spans 343 residues: Dihydroorotase (343 aa).

Residues H14 and H16 each contribute to the Zn(2+) site. Residues 16 to 18 (HLR) and N42 contribute to the substrate site. Zn(2+) is bound by residues K97, H136, H170, and D242. Residue K97 is modified to N6-carboxylysine. H136 serves as a coordination point for substrate. The active site involves D242. Residues H246 and A258 each contribute to the substrate site.

Belongs to the metallo-dependent hydrolases superfamily. DHOase family. Class II DHOase subfamily. In terms of assembly, homodimer. Zn(2+) serves as cofactor.

It carries out the reaction (S)-dihydroorotate + H2O = N-carbamoyl-L-aspartate + H(+). It functions in the pathway pyrimidine metabolism; UMP biosynthesis via de novo pathway; (S)-dihydroorotate from bicarbonate: step 3/3. Its function is as follows. Catalyzes the reversible cyclization of carbamoyl aspartate to dihydroorotate. This Helicobacter hepaticus (strain ATCC 51449 / 3B1) protein is Dihydroorotase.